Reading from the N-terminus, the 563-residue chain is Arginine--tRNA ligase (563 aa).

Positions 121-131 match the 'HIGH' region motif; that stretch reads PNIAKPFSIGH.

The protein belongs to the class-I aminoacyl-tRNA synthetase family. Monomer.

It localises to the cytoplasm. It carries out the reaction tRNA(Arg) + L-arginine + ATP = L-arginyl-tRNA(Arg) + AMP + diphosphate. In Streptococcus pneumoniae (strain Hungary19A-6), this protein is Arginine--tRNA ligase.